The primary structure comprises 216 residues: Orotidine 5'-phosphate decarboxylase (216 aa).

Residues aspartate 12, lysine 34, 62-71 (DFKVADIDAT), serine 119, 172-182 (PGVGFQGGNAK), glycine 194, and arginine 195 each bind substrate. Lysine 64 acts as the Proton donor in catalysis.

This sequence belongs to the OMP decarboxylase family. Type 1 subfamily. In terms of assembly, homodimer.

It catalyses the reaction orotidine 5'-phosphate + H(+) = UMP + CO2. The protein operates within pyrimidine metabolism; UMP biosynthesis via de novo pathway; UMP from orotate: step 2/2. Catalyzes the decarboxylation of orotidine 5'-monophosphate (OMP) to uridine 5'-monophosphate (UMP). In Methanosphaera stadtmanae (strain ATCC 43021 / DSM 3091 / JCM 11832 / MCB-3), this protein is Orotidine 5'-phosphate decarboxylase.